The chain runs to 342 residues: Protein-glutamate methylesterase/protein-glutamine glutaminase 2 (342 aa).

Residues 2 to 119 (NIGIVNDLPL…GGSADPSQPL (118 aa)) form the Response regulatory domain. Asp53 carries the post-translational modification 4-aspartylphosphate. The region spanning 144–337 (PAPQGALPPL…DQLISLVQRN (194 aa)) is the CheB-type methylesterase domain. Catalysis depends on residues Ser159, His186, and Asp279.

Belongs to the CheB family. Post-translationally, phosphorylated by CheA. Phosphorylation of the N-terminal regulatory domain activates the methylesterase activity.

Its subcellular location is the cytoplasm. The enzyme catalyses [protein]-L-glutamate 5-O-methyl ester + H2O = L-glutamyl-[protein] + methanol + H(+). It carries out the reaction L-glutaminyl-[protein] + H2O = L-glutamyl-[protein] + NH4(+). Its function is as follows. Involved in chemotaxis. Part of a chemotaxis signal transduction system that modulates chemotaxis in response to various stimuli. Catalyzes the demethylation of specific methylglutamate residues introduced into the chemoreceptors (methyl-accepting chemotaxis proteins or MCP) by CheR. Also mediates the irreversible deamidation of specific glutamine residues to glutamic acid. The sequence is that of Protein-glutamate methylesterase/protein-glutamine glutaminase 2 from Burkholderia mallei (strain ATCC 23344).